The following is a 117-amino-acid chain: Hemerythrin subunit alpha (117 aa).

7 residues coordinate Fe cation: histidine 24, histidine 53, glutamate 57, histidine 72, histidine 76, histidine 105, and aspartate 110.

The protein belongs to the hemerythrin family. Octamer composed of two types of chains: alpha and beta.

Hemerythrin is a respiratory protein in blood cells of certain marine worms. The oxygen-binding site in each chain contains two iron atoms. This is Hemerythrin subunit alpha from Lingula reevii (Inarticulated brachiopod).